The primary structure comprises 359 residues: MDPEETSVYLDYYYATSPNPDIRETHSHVPYTSVFLPVFYTAVFLTGVLGNLVLMGALHFKPGSRRLIDIFIINLAASDFIFLVTLPLWVDKEASLGLWRTGSFLCKGSSYMISVNMHCSVFLLTCMSVDRYLAIVCPVVSRKFRRTDCAYVVCASIWFISCLLGLPTLLSRELTLIDDKPYCAEKKATPLKLIWSLVALIFTFFVPLLNIVTCYCCIARKLCAHYQQSGRHNKKLKKSIKIILIVVAAFLVSWLPFNTFKLLAIVSGLQERYFPSAMLQLGMEVSGPLAFANSCVNPFIYYIFDSYIRRAIVHCLCPCLKNYDFGSSTETSDSHLTKALSTFIHAEDFTRRRKRSVSL.

Residues 1-33 are Extracellular-facing; sequence MDPEETSVYLDYYYATSPNPDIRETHSHVPYTS. The helical transmembrane segment at 34-54 threads the bilayer; it reads VFLPVFYTAVFLTGVLGNLVL. Topologically, residues 55 to 69 are cytoplasmic; the sequence is MGALHFKPGSRRLID. A helical membrane pass occupies residues 70–90; it reads IFIINLAASDFIFLVTLPLWV. The Extracellular portion of the chain corresponds to 91–120; it reads DKEASLGLWRTGSFLCKGSSYMISVNMHCS. A helical membrane pass occupies residues 121–141; the sequence is VFLLTCMSVDRYLAIVCPVVS. At 142-149 the chain is on the cytoplasmic side; it reads RKFRRTDC. Residues 150 to 170 form a helical membrane-spanning segment; it reads AYVVCASIWFISCLLGLPTLL. Topologically, residues 171 to 192 are extracellular; that stretch reads SRELTLIDDKPYCAEKKATPLK. Residues 193–213 form a helical membrane-spanning segment; the sequence is LIWSLVALIFTFFVPLLNIVT. Topologically, residues 214–239 are cytoplasmic; that stretch reads CYCCIARKLCAHYQQSGRHNKKLKKS. Residues 240 to 260 traverse the membrane as a helical segment; that stretch reads IKIILIVVAAFLVSWLPFNTF. Over 261-283 the chain is Extracellular; the sequence is KLLAIVSGLQERYFPSAMLQLGM. The chain crosses the membrane as a helical span at residues 284 to 304; the sequence is EVSGPLAFANSCVNPFIYYIF. The Cytoplasmic portion of the chain corresponds to 305-359; it reads DSYIRRAIVHCLCPCLKNYDFGSSTETSDSHLTKALSTFIHAEDFTRRRKRSVSL. S358 carries the phosphoserine modification.

This sequence belongs to the G-protein coupled receptor 1 family. Interacts with adapter YWHAE; this interaction promotes ER-to-Golgi transport of GPR15. Phosphorylation is necessary for YWHAE binding and efficient surface expression. Post-translationally, O-glycosylated. Sialylated O-glycans in the N-terminal tail inhibits binding of GPR15LG. In terms of processing, sulfation is required for efficient binding of GPR15LG.

It localises to the cell membrane. Functionally, g protein-coupled receptor that plays an important role in immune homeostasis. Acts via its natural ligand GPR15LG, a chemokine-like polypeptide strongly expressed in gastrointestinal tissues. GPR15-GPR15LG signaling axis regulates intestinal homeostasis and inflammation through the migration of immune cells. Controls thereby the specific homing of T-cells, particularly FOXP3+ regulatory T-cells (Tregs), to the large intestine lamina propria. Also required for skin localization of thymus-derived dendritic epidermal T-cells. Plays an important role in mediating cytoprotective function as well as angiogenesis of thrombomodulin. Mechanistically, preferentially signals through the Gi/o pathway to inhibit adenylate cyclase activity and activate a phosphatidylinositol-calcium second messenger system that regulates the release of Ca(2+) ions from intracellular stores. This is G-protein coupled receptor 15 (GPR15) from Macaca fascicularis (Crab-eating macaque).